The sequence spans 151 residues: Ribosome maturation factor RimP (151 aa).

Belongs to the RimP family.

The protein localises to the cytoplasm. Functionally, required for maturation of 30S ribosomal subunits. In Shewanella oneidensis (strain ATCC 700550 / JCM 31522 / CIP 106686 / LMG 19005 / NCIMB 14063 / MR-1), this protein is Ribosome maturation factor RimP.